Reading from the N-terminus, the 769-residue chain is Cap-specific mRNA (nucleoside-2'-O-)-methyltransferase 2 (769 aa).

The Adrift-type SAM-dependent 2'-O-MTase domain occupies 109–322; that stretch reads ELCTQAWCKF…VYVVCLYYKG (214 aa). Residue lysine 117 is part of the active site. Glycine 148, tryptophan 167, and aspartate 235 together coordinate S-adenosyl-L-methionine. Residue aspartate 235 is part of the active site. Lysine 275 serves as the catalytic Proton acceptor.

The protein localises to the nucleus. It is found in the cytoplasm. It catalyses the reaction a 5'-end (N(7)-methyl 5'-triphosphoguanosine)-(2'-O-methyl-ribonucleoside)-(ribonucleotide) in mRNA + S-adenosyl-L-methionine = a 5'-end (N(7)-methyl 5'-triphosphoguanosine)-(2'-O-methyl-ribonucleoside)-(2'-O-methyl-ribonucleotide) in mRNA + S-adenosyl-L-homocysteine + H(+). Its function is as follows. S-adenosyl-L-methionine-dependent methyltransferase that mediates mRNA cap2 2'-O-ribose methylation to the 5'-cap structure of mRNAs. Methylates the ribose of the second nucleotide of a m(7)GpppG-capped mRNA and small nuclear RNA (snRNA) (cap0) to produce m(7)GpppRmpNm (cap2). Recognizes a guanosine cap on RNA independently of its N(7) methylation status. Display cap2 methylation on both cap0 and cap1. Displays a preference for cap1 RNAs. This is Cap-specific mRNA (nucleoside-2'-O-)-methyltransferase 2 (CMTR2) from Pongo abelii (Sumatran orangutan).